The primary structure comprises 382 residues: Proton extrusion protein PxcA (382 aa).

Helical transmembrane passes span 156–176 (TLIS…VQQV), 257–277 (AVKN…VCVF), 305–325 (IILF…TVLL), and 340–360 (FILL…KYWI).

This sequence belongs to the CemA family.

Its subcellular location is the cell inner membrane. Functionally, required for H(+) efflux immediately after light irradiation to form a rapid H(+) concentration gradient across the thylakoid membranes. Together with PxcL, contributes to transient H(+) uptake following dark to light transition. This chain is Proton extrusion protein PxcA, found in Synechococcus sp. (strain WH7803).